Reading from the N-terminus, the 101-residue chain is Small ribosomal subunit protein uS14 (101 aa).

This sequence belongs to the universal ribosomal protein uS14 family. In terms of assembly, part of the 30S ribosomal subunit. Contacts proteins S3 and S10.

In terms of biological role, binds 16S rRNA, required for the assembly of 30S particles and may also be responsible for determining the conformation of the 16S rRNA at the A site. This Methylobacterium sp. (strain 4-46) protein is Small ribosomal subunit protein uS14.